The following is a 461-amino-acid chain: Phosphoglycerate kinase, chloroplastic (461 aa).

The N-terminal 60 residues, M1 to A60, are a transit peptide targeting the chloroplast. (2R)-3-phosphoglycerate contacts are provided by A82, D83, N85, R100, S122, H123, G125, R126, R182, H214, and R215. ADP is bound at residue G260. G260 lines the CDP pocket. Residues K262 and K266 each contribute to the AMP site. K266 serves as a coordination point for ATP. Residue G284 coordinates ADP. Residue G284 participates in CDP binding. AMP contacts are provided by G285 and G357. Residues G285 and G357 each coordinate ATP. Residues G382 and F387 each coordinate CDP. ADP is bound at residue F387. E388 serves as a coordination point for AMP. Positions 388, 419, and 420 each coordinate ATP. D419 is a binding site for Mg(2+).

This sequence belongs to the phosphoglycerate kinase family. Monomer. Mg(2+) is required as a cofactor.

It is found in the plastid. The protein localises to the chloroplast. The catalysed reaction is (2R)-3-phosphoglycerate + ATP = (2R)-3-phospho-glyceroyl phosphate + ADP. Its pathway is carbohydrate biosynthesis; Calvin cycle. In Chlamydomonas reinhardtii (Chlamydomonas smithii), this protein is Phosphoglycerate kinase, chloroplastic.